Here is a 183-residue protein sequence, read N- to C-terminus: MITMKDIIRDGHPTLREKAKELSFPLSNNDKETLRAMREFLINSQDEETAKRYGLRSGVGLAAPQINEPKRMIAVYLPDDGNGKSYDYMLVNPKIMSYSVQEAYLPTGEGCLSVDENIPGLVHRHHRVTIKAQDIDGNDVKLRLKGYPAIVFQHEIDHLNGIMFYDYIDANEPLKPHEEAVEV.

Residues cysteine 111 and histidine 154 each coordinate Fe cation. The active site involves glutamate 155. Residue histidine 158 participates in Fe cation binding.

It belongs to the polypeptide deformylase family. Fe(2+) serves as cofactor.

It carries out the reaction N-terminal N-formyl-L-methionyl-[peptide] + H2O = N-terminal L-methionyl-[peptide] + formate. In terms of biological role, removes the formyl group from the N-terminal Met of newly synthesized proteins. Requires at least a dipeptide for an efficient rate of reaction. N-terminal L-methionine is a prerequisite for activity but the enzyme has broad specificity at other positions. The polypeptide is Peptide deformylase (Staphylococcus epidermidis (strain ATCC 35984 / DSM 28319 / BCRC 17069 / CCUG 31568 / BM 3577 / RP62A)).